Reading from the N-terminus, the 257-residue chain is UPF0246 protein VCM66_2278 (257 aa).

The protein belongs to the UPF0246 family.

The protein is UPF0246 protein VCM66_2278 of Vibrio cholerae serotype O1 (strain M66-2).